We begin with the raw amino-acid sequence, 387 residues long: Phosphoglycerate kinase (387 aa).

Residues 21 to 23 (DLN), arginine 36, 59 to 62 (HLGR), arginine 113, and arginine 146 each bind substrate. ATP-binding positions include lysine 197, glutamate 314, and 340-343 (GGDT).

Belongs to the phosphoglycerate kinase family. As to quaternary structure, monomer.

The protein localises to the cytoplasm. The enzyme catalyses (2R)-3-phosphoglycerate + ATP = (2R)-3-phospho-glyceroyl phosphate + ADP. Its pathway is carbohydrate degradation; glycolysis; pyruvate from D-glyceraldehyde 3-phosphate: step 2/5. The polypeptide is Phosphoglycerate kinase (Pseudomonas fluorescens (strain SBW25)).